Consider the following 148-residue polypeptide: UPF0756 membrane protein YeaL (148 aa).

4 consecutive transmembrane segments (helical) span residues 14–34, 51–71, 86–106, and 112–132; these read ALGFISHNTTVAVSILVLIIV, LSIGIIILTIGVMAPIASGTL, LVAIAVGVIVSWLGGRGVTLM, and LVAGLLVGTVLGVALFRGVPV.

Belongs to the UPF0756 family.

It is found in the cell membrane. The sequence is that of UPF0756 membrane protein YeaL from Escherichia coli O157:H7.